The chain runs to 219 residues: uncharacterized protein (219 aa).

The helical transmembrane segment at 13-32 (VFGLFLFSLIFFGLLSLATF) threads the bilayer.

The protein localises to the membrane. This is an uncharacterized protein from Aquifex aeolicus (strain VF5).